Here is a 276-residue protein sequence, read N- to C-terminus: Large ribosomal subunit protein uL2 (276 aa).

The interval 208 to 276 is disordered; that stretch reads KAGRNRHRGI…KLIISRRKGK (69 aa). The span at 230-240 shows a compositional bias: basic and acidic residues; the sequence is DHPHGGGEGKK. The segment covering 255–276 has biased composition (basic residues); sequence KGAKTRRKKASDKLIISRRKGK.

Belongs to the universal ribosomal protein uL2 family. In terms of assembly, part of the 50S ribosomal subunit. Forms a bridge to the 30S subunit in the 70S ribosome.

One of the primary rRNA binding proteins. Required for association of the 30S and 50S subunits to form the 70S ribosome, for tRNA binding and peptide bond formation. It has been suggested to have peptidyltransferase activity; this is somewhat controversial. Makes several contacts with the 16S rRNA in the 70S ribosome. This is Large ribosomal subunit protein uL2 from Campylobacter lari (strain RM2100 / D67 / ATCC BAA-1060).